The following is a 193-amino-acid chain: Pyridoxal 5'-phosphate synthase subunit PdxT (193 aa).

50-52 (GES) contacts L-glutamine. Catalysis depends on C82, which acts as the Nucleophile. L-glutamine is bound by residues R109 and 136–137 (IR). Residues H172 and E174 each act as charge relay system in the active site.

The protein belongs to the glutaminase PdxT/SNO family. As to quaternary structure, in the presence of PdxS, forms a dodecamer of heterodimers. Only shows activity in the heterodimer.

It catalyses the reaction aldehydo-D-ribose 5-phosphate + D-glyceraldehyde 3-phosphate + L-glutamine = pyridoxal 5'-phosphate + L-glutamate + phosphate + 3 H2O + H(+). It carries out the reaction L-glutamine + H2O = L-glutamate + NH4(+). It participates in cofactor biosynthesis; pyridoxal 5'-phosphate biosynthesis. Functionally, catalyzes the hydrolysis of glutamine to glutamate and ammonia as part of the biosynthesis of pyridoxal 5'-phosphate. The resulting ammonia molecule is channeled to the active site of PdxS. The sequence is that of Pyridoxal 5'-phosphate synthase subunit PdxT from Streptococcus pneumoniae (strain JJA).